Reading from the N-terminus, the 345-residue chain is Inositol phosphoceramide mannosyltransferase 2 (345 aa).

Residues Val4 to Leu24 form a helical membrane-spanning segment. Asn55 carries N-linked (GlcNAc...) asparagine glycosylation. The helical transmembrane segment at Tyr220–Trp240 threads the bilayer. The N-linked (GlcNAc...) asparagine glycan is linked to Asn269. Residues Leu296 to Ser316 form a helical membrane-spanning segment.

Belongs to the glycosyltransferase 32 family.

The protein resides in the golgi apparatus. It localises to the cis-Golgi network membrane. Its subcellular location is the trans-Golgi network membrane. Its function is as follows. With imt1 and imt3, is required for the synthesis of mannosyl phosphorylinositol ceramide (MIPC). Catalyzes the addition of mannosyl to phosphorylinositol ceramide (IPC). MIPC is essential for cell morphology, cell-surface distribution of ergosterol, localization for plasma-membrane transporters, and lipid-raft-mediated endocytosis of plasma membrane proteins to the vacuole. This Schizosaccharomyces pombe (strain 972 / ATCC 24843) (Fission yeast) protein is Inositol phosphoceramide mannosyltransferase 2.